The following is a 57-amino-acid chain: Large ribosomal subunit protein uL30 (57 aa).

This sequence belongs to the universal ribosomal protein uL30 family. Part of the 50S ribosomal subunit.

This is Large ribosomal subunit protein uL30 from Maridesulfovibrio salexigens (strain ATCC 14822 / DSM 2638 / NCIMB 8403 / VKM B-1763) (Desulfovibrio salexigens).